Reading from the N-terminus, the 425-residue chain is MMKLEMICTGEEVLSGQIVDTNAAWFASTMMEHGIEIQRRVTVGDRLEDLIAVFQERSLHADVILVNGGLGPTSDDMSAEAMAKAKGESLVENREWRQHLEDWFTRNNREMPVSNLKQAMLPESAVMVDNPVGTACGFRVKLNRAWLFFTPGVPFELKHMVKEQFIPFIREEFDLDAKVALKKLLTIGHGESSLADKIEPLELPEGITIGYRSSMPHIEIKIFARGEKAIALLPRVTGHIKMVLGTAVVAEDKATLAEEIHTKLLNSGLTLSVAESCTGGMITSQLVDFPGSSSYLQHGLVTYSNESKVRVLGVNPATLDDHGAVSIPTVEEMAKGARAILDSDFALATSGIAGPDGGTEEKPVGTVAIALATRSGVYSQMIKLPRRSRDLVRSLSAAVAYDMLRRELLTEAVIVDYQSIGRFSK.

It belongs to the CinA family.

In Shewanella sp. (strain ANA-3), this protein is CinA-like protein.